The primary structure comprises 299 residues: Formamidopyrimidine-DNA glycosylase (299 aa).

Catalysis depends on Pro-2, which acts as the Schiff-base intermediate with DNA. Glu-3 functions as the Proton donor in the catalytic mechanism. The active-site Proton donor; for beta-elimination activity is Lys-58. Residues His-106, Arg-125, and Lys-168 each contribute to the DNA site. The segment at 259 to 295 (RVYDRVGHACPTKGCTGRVGRIVQGGRSTFFCETCQV) adopts an FPG-type zinc-finger fold. Arg-285 (proton donor; for delta-elimination activity) is an active-site residue.

This sequence belongs to the FPG family. As to quaternary structure, monomer. Zn(2+) is required as a cofactor.

The catalysed reaction is Hydrolysis of DNA containing ring-opened 7-methylguanine residues, releasing 2,6-diamino-4-hydroxy-5-(N-methyl)formamidopyrimidine.. It carries out the reaction 2'-deoxyribonucleotide-(2'-deoxyribose 5'-phosphate)-2'-deoxyribonucleotide-DNA = a 3'-end 2'-deoxyribonucleotide-(2,3-dehydro-2,3-deoxyribose 5'-phosphate)-DNA + a 5'-end 5'-phospho-2'-deoxyribonucleoside-DNA + H(+). Involved in base excision repair of DNA damaged by oxidation or by mutagenic agents. Acts as a DNA glycosylase that recognizes and removes damaged bases. Has a preference for oxidized purines, such as 7,8-dihydro-8-oxoguanine (8-oxoG). Has AP (apurinic/apyrimidinic) lyase activity and introduces nicks in the DNA strand. Cleaves the DNA backbone by beta-delta elimination to generate a single-strand break at the site of the removed base with both 3'- and 5'-phosphates. In Methylorubrum extorquens (strain CM4 / NCIMB 13688) (Methylobacterium extorquens), this protein is Formamidopyrimidine-DNA glycosylase.